Here is a 282-residue protein sequence, read N- to C-terminus: HMG box-containing protein R545 (282 aa).

The disordered stretch occupies residues 1-282; it reads MPKKTATKAN…KKEASDEESD (282 aa). A compositionally biased stretch (acidic residues) spans 16–29; sequence DSENDSVVSEEEDN. Over residues 70-87 the composition is skewed to basic residues; the sequence is KGKVNAKKAPAKKAPVKK. Residues 93–121 show a composition bias toward acidic residues; sequence DSDNEEDEASEDGSDDEEDVVSADDSDSD. Residues 127-153 show a composition bias toward basic residues; sequence KAAKKAPAKKAPAKKAPAKKAPAKKGK. Composition is skewed to basic and acidic residues over residues 176–187 and 197–214; these read TKKDGDKPKKPL and RMPELREEEPGKPYKEYM. The HMG box DNA-binding region spans 183–252; it reads PKKPLSDYQK…KAPAKGGSKS (70 aa). The segment covering 253-273 has biased composition (basic residues); it reads TAKKAPAKKAPAKKAPAKKSK.

The chain is HMG box-containing protein R545 from Acanthamoeba polyphaga mimivirus (APMV).